Consider the following 1342-residue polypeptide: DNA-directed RNA polymerase subunit beta (1342 aa).

It belongs to the RNA polymerase beta chain family. As to quaternary structure, the RNAP catalytic core consists of 2 alpha, 1 beta, 1 beta' and 1 omega subunit. When a sigma factor is associated with the core the holoenzyme is formed, which can initiate transcription.

It carries out the reaction RNA(n) + a ribonucleoside 5'-triphosphate = RNA(n+1) + diphosphate. Functionally, DNA-dependent RNA polymerase catalyzes the transcription of DNA into RNA using the four ribonucleoside triphosphates as substrates. In Histophilus somni (strain 129Pt) (Haemophilus somnus), this protein is DNA-directed RNA polymerase subunit beta.